A 289-amino-acid polypeptide reads, in one-letter code: O-methyltransferase asqN (289 aa).

S-adenosyl-L-methionine is bound at residue D155. H195 functions as the Proton acceptor in the catalytic mechanism.

The protein belongs to the class I-like SAM-binding methyltransferase superfamily. Cation-independent O-methyltransferase family.

The protein operates within secondary metabolite biosynthesis. Its pathway is alkaloid biosynthesis. It functions in the pathway mycotoxin biosynthesis. Its function is as follows. O-methyltransferase; part of the gene cluster that mediates the biosynthesis of the aspoquinolone mycotoxins. The role of asqN within the aspoquinolone pathway has still to be determined. The first step of the pathway is catalyzed by the nonribosomal peptide synthetase asqK that condenses anthranilic acid and O-methyl-L-tyrosine to produce 4'-methoxycyclopeptin. 4'-methoxycyclopeptin is then converted to 4'-methoxydehydrocyclopeptin by the ketoglutarate-dependent dioxygenase asqJ. AsqJ also converts its first product 4'-methoxydehydrocyclopeptin to 4'-methoxycyclopenin. The following conversion of 4'-methoxycyclopenin into 4'-methoxyviridicatin is catalyzed by the cyclopenase asqI. 4'-methoxyviridicatin is the precursor of quinolone natural products, and is further converted to quinolinone B. The prenyltransferase asqH1 then catalyzes the canonical Friedel-Crafts alkylation of quinolinone B with dimethylallyl cation to yield dimethylallyl quinolone, which is subjected to FAD-dependent dehydrogenation by the FAD-linked oxidoreductase asqF to yield conjugated aryl diene. The delta(3') double bond then serves as the site of the second alkylation with DMAPP catalyzed by the prenyltransferase asqH2 to yield a carbenium ion intermediate, which can be attacked by H(2)O to yield a styrenyl quinolone containing a C3'-hydroxyprenyl chain. The FAD-dependent monooxygenase asqG performs epoxidation of the terminal C7'-C8' olefin. Finally, after dehydratation of the epoxide at C3 by asqC, the quinolone epoxide rearrangement protein asqO catalyzes an enzymatic 3-exo-tet cyclization to yield the cyclopropyl-THF ring system in aspoquinolone. The chain is O-methyltransferase asqN from Emericella nidulans (strain FGSC A4 / ATCC 38163 / CBS 112.46 / NRRL 194 / M139) (Aspergillus nidulans).